Here is a 412-residue protein sequence, read N- to C-terminus: 43 kDa receptor-associated protein of the synapse (412 aa).

Glycine 2 carries the N-myristoyl glycine lipid modification. TPR repeat units lie at residues threonine 6–proline 39, threonine 83–threonine 116, glycine 123–asparagine 156, cysteine 163–tyrosine 196, alanine 206–histidine 239, alanine 246–isoleucine 279, and isoleucine 286–leucine 319. Tyrosine 196 carries the phosphotyrosine modification. The RING-type zinc finger occupies cysteine 363–arginine 403.

The protein belongs to the RAPsyn family. In terms of tissue distribution, expressed in muscle fibers and in neurons.

Its subcellular location is the cell membrane. It localises to the postsynaptic cell membrane. It is found in the cytoplasm. The protein localises to the cytoskeleton. In terms of biological role, postsynaptic protein required for clustering of nicotinic acetylcholine receptors (nAChRs) at the neuromuscular junction. It may link the receptor to the underlying postsynaptic cytoskeleton, possibly by direct association with actin or spectrin. The sequence is that of 43 kDa receptor-associated protein of the synapse (RAPSN) from Gallus gallus (Chicken).